The following is a 221-amino-acid chain: Probable transaldolase (221 aa).

Catalysis depends on K83, which acts as the Schiff-base intermediate with substrate.

Belongs to the transaldolase family. Type 3B subfamily.

The protein localises to the cytoplasm. The enzyme catalyses D-sedoheptulose 7-phosphate + D-glyceraldehyde 3-phosphate = D-erythrose 4-phosphate + beta-D-fructose 6-phosphate. Its pathway is carbohydrate degradation; pentose phosphate pathway; D-glyceraldehyde 3-phosphate and beta-D-fructose 6-phosphate from D-ribose 5-phosphate and D-xylulose 5-phosphate (non-oxidative stage): step 2/3. Transaldolase is important for the balance of metabolites in the pentose-phosphate pathway. The sequence is that of Probable transaldolase from Petrotoga mobilis (strain DSM 10674 / SJ95).